The following is a 126-amino-acid chain: Small ribosomal subunit protein uS13 (126 aa).

The interval 93–126 (RRGLPVRGQRTKTNARTRKGPKRTVAGKKKAGRK) is disordered.

This sequence belongs to the universal ribosomal protein uS13 family. In terms of assembly, part of the 30S ribosomal subunit. Forms a loose heterodimer with protein S19. Forms two bridges to the 50S subunit in the 70S ribosome.

In terms of biological role, located at the top of the head of the 30S subunit, it contacts several helices of the 16S rRNA. In the 70S ribosome it contacts the 23S rRNA (bridge B1a) and protein L5 of the 50S subunit (bridge B1b), connecting the 2 subunits; these bridges are implicated in subunit movement. Contacts the tRNAs in the A and P-sites. This Beutenbergia cavernae (strain ATCC BAA-8 / DSM 12333 / CCUG 43141 / JCM 11478 / NBRC 16432 / NCIMB 13614 / HKI 0122) protein is Small ribosomal subunit protein uS13.